Consider the following 2151-residue polypeptide: Protein PRR14L (2151 aa).

Composition is skewed to basic and acidic residues over residues 112–123 and 134–154; these read KRSESMEPKVFR and EPSE…EEKT. Disordered stretches follow at residues 112 to 160, 206 to 225, and 314 to 350; these read KRSE…SQED, GTKT…KDLS, and QLHG…SDLS. Residue Ser-157 is modified to Phosphoserine. Polar residues predominate over residues 322-350; sequence QPSSTHDSPTATSPLKENSEVSCFTSDLS. Ser-582 and Ser-945 each carry phosphoserine. Residues 974–1017 are disordered; that stretch reads SNQNRPDECKSEGQSAKEMLSSDQRETVTEPHGEVNHNQKDLLV. Residues 996–1013 show a composition bias toward basic and acidic residues; sequence DQRETVTEPHGEVNHNQK. Phosphoserine is present on Ser-1029. Residues 1091–1103 are compositionally biased toward basic and acidic residues; the sequence is DSRSTLSRRELDA. 4 disordered regions span residues 1091-1115, 1178-1226, 1782-1802, and 1986-2012; these read DSRS…DSDF, DSHY…SCHD, TGVH…PLQD, and AACP…KVSQ. The span at 1178–1187 shows a compositional bias: polar residues; sequence DSHYGQQDKG. A compositionally biased stretch (basic and acidic residues) spans 1188–1201; that stretch reads TSLRETQEMTEGSR.

The polypeptide is Protein PRR14L (PRR14L) (Homo sapiens (Human)).